The chain runs to 267 residues: Putative ankyrin repeat protein RF_1099 (267 aa).

ANK repeat units lie at residues 46 to 75 (DPIT…GVNQ), 78 to 107 (LGWV…SMSL), 136 to 165 (DGIT…NPNV), and 170 to 199 (TGMT…DPNI). Residues 238–265 (KQKIIKERNSIKTRNKEKEKEIKKLFNS) adopt a coiled-coil conformation.

This chain is Putative ankyrin repeat protein RF_1099, found in Rickettsia felis (strain ATCC VR-1525 / URRWXCal2) (Rickettsia azadi).